Here is a 251-residue protein sequence, read N- to C-terminus: Putative glutamine amidotransferase YLR126C (251 aa).

A Glutamine amidotransferase type-1 domain is found at 48–232 (EVFHVQKNVF…NRYERQCQEL (185 aa)). Catalysis depends on for GATase activity residues Cys112, His198, and Glu200.

Its subcellular location is the cytoplasm. May have a role in copper and iron homeostasis. The sequence is that of Putative glutamine amidotransferase YLR126C from Saccharomyces cerevisiae (strain ATCC 204508 / S288c) (Baker's yeast).